A 248-amino-acid polypeptide reads, in one-letter code: Small ribosomal subunit protein uS3 (248 aa).

One can recognise a KH type-2 domain in the interval 39 to 113 (IRAYLTKQLS…TIRINVVEVT (75 aa)). Residues 218-248 (ERPEQKVPLQQPKRRQQRRRPTFEDRSAVEA) form a disordered region. Residues 238–248 (PTFEDRSAVEA) show a composition bias toward basic and acidic residues.

Belongs to the universal ribosomal protein uS3 family. Part of the 30S ribosomal subunit. Forms a tight complex with proteins S10 and S14.

In terms of biological role, binds the lower part of the 30S subunit head. Binds mRNA in the 70S ribosome, positioning it for translation. This Synechococcus sp. (strain JA-3-3Ab) (Cyanobacteria bacterium Yellowstone A-Prime) protein is Small ribosomal subunit protein uS3.